The sequence spans 115 residues: MTDSILKCTTRHIRIFTARCENNDLVQDSEHLTLDLDPDNEFIWEELVIGKVHKRFSELVDSYSGKDLSDYNLRKIGSDLEGTIRQLLQAGELKYNPDCRVLNYSMGLPRTKDLL.

This sequence belongs to the complex I NdhM subunit family. NDH-1 can be composed of about 15 different subunits; different subcomplexes with different compositions have been identified which probably have different functions.

Its subcellular location is the cellular thylakoid membrane. The catalysed reaction is a plastoquinone + NADH + (n+1) H(+)(in) = a plastoquinol + NAD(+) + n H(+)(out). It carries out the reaction a plastoquinone + NADPH + (n+1) H(+)(in) = a plastoquinol + NADP(+) + n H(+)(out). Its function is as follows. NDH-1 shuttles electrons from an unknown electron donor, via FMN and iron-sulfur (Fe-S) centers, to quinones in the respiratory and/or the photosynthetic chain. The immediate electron acceptor for the enzyme in this species is believed to be plastoquinone. Couples the redox reaction to proton translocation, and thus conserves the redox energy in a proton gradient. Cyanobacterial NDH-1 also plays a role in inorganic carbon-concentration. The chain is NAD(P)H-quinone oxidoreductase subunit M from Prochlorococcus marinus (strain MIT 9211).